The sequence spans 1032 residues: Kinesin heavy chain isoform 5A (1032 aa).

At A2 the chain carries N-acetylalanine. The Kinesin motor domain occupies 9-327; it reads SIKVLCRFRP…LMFGQRAKTI (319 aa). Position 86 to 93 (86 to 93) interacts with ATP; that stretch reads GQTSSGKT. The interval 174–315 is microtubule-binding; it reads VSGPEEILDV…PSSYNDAETK (142 aa). The segment at 271–361 is necessary for interaction with ZFYVE27; it reads EGTKSYVPYR…KTKAQKETIA (91 aa). A coiled-coil region spans residues 331–906; that stretch reads ASVNLELTAE…VDRIKEAVRY (576 aa). The interval 353–1032 is interaction with BICD2; it reads TKAQKETIAK…FPLHQETAAS (680 aa). T397 is subject to Phosphothreonine. The segment at 904-939 is disordered; the sequence is VRYKSSGKRGHSAQIAKPVRPGHYPASSPTNPYGTR. The segment at 907 to 1032 is globular; sequence KSSGKRGHSA…FPLHQETAAS (126 aa).

Belongs to the TRAFAC class myosin-kinesin ATPase superfamily. Kinesin family. Kinesin subfamily. Oligomer composed of two heavy chains and two light chains. Interacts with GRIP1. Interacts with FMR1 (via C-terminus); this interaction is increased in a mGluR-dependent manner. Interacts with BORCS5. Interacts with ZFYVE27. Interacts with VAPA, VAPB, SURF4, RAB11A (GDP-bound form), RAB11B (GDP-bound form) and RTN3 in a ZFYVE27-dependent manner. Interacts with BICD2. Interacts with DTNB.

It is found in the cytoplasm. The protein localises to the perinuclear region. The protein resides in the cytoskeleton. Its subcellular location is the perikaryon. It carries out the reaction ATP + H2O + a kinesin associated with a microtubule at position (n) = ADP + phosphate a kinesin associated with a microtubule at position (n+1, toward the plus end).. In terms of biological role, microtubule-dependent motor required for slow axonal transport of neurofilament proteins (NFH, NFM and NFL). Can induce formation of neurite-like membrane protrusions in non-neuronal cells in a ZFYVE27-dependent manner. The ZFYVE27-KIF5A complex contributes to the vesicular transport of VAPA, VAPB, SURF4, RAB11A, RAB11B and RTN3 proteins in neurons. Required for anterograde axonal transportation of MAPK8IP3/JIP3 which is essential for MAPK8IP3/JIP3 function in axon elongation. In Pongo abelii (Sumatran orangutan), this protein is Kinesin heavy chain isoform 5A (KIF5A).